Here is a 146-residue protein sequence, read N- to C-terminus: Basic phospholipase A2 beta-bungarotoxin A2 chain (146 aa).

The signal sequence occupies residues 1-19 (MNPAHLLVLSAVCVSLLGA). Residues 20-27 (SNIPPQSL) constitute a propeptide that is removed on maturation. 6 disulfides stabilise this stretch: cysteine 54-cysteine 145, cysteine 56-cysteine 72, cysteine 71-cysteine 126, cysteine 78-cysteine 119, cysteine 87-cysteine 112, and cysteine 105-cysteine 117. Ca(2+) is bound by residues tyrosine 55, glycine 57, and glycine 59. Residue histidine 75 is part of the active site. Residue aspartate 76 coordinates Ca(2+). Residue aspartate 120 is part of the active site.

This sequence belongs to the phospholipase A2 family. Group I subfamily. D49 sub-subfamily. In terms of assembly, heterodimer; disulfide-linked. The A chain has phospholipase A2 activity and the B chain shows homology with the basic protease inhibitors. Ca(2+) serves as cofactor. Expressed by the venom gland.

It localises to the secreted. It carries out the reaction a 1,2-diacyl-sn-glycero-3-phosphocholine + H2O = a 1-acyl-sn-glycero-3-phosphocholine + a fatty acid + H(+). Snake venom phospholipase A2 (PLA2) that inhibits neuromuscular transmission by blocking acetylcholine release from the nerve termini. PLA2 catalyzes the calcium-dependent hydrolysis of the 2-acyl groups in 3-sn-phosphoglycerides. The chain is Basic phospholipase A2 beta-bungarotoxin A2 chain from Bungarus flaviceps flaviceps (Red-headed krait).